Reading from the N-terminus, the 1380-residue chain is Respiration factor 2 (1380 aa).

2 consecutive C2H2-type zinc fingers follow at residues 151–173 (FLCPTCTRGFVRQEHLKRHQHSH) and 179–202 (YLCIFCGRCFARRDLVLRHQQKLH). Residues 208–231 (TGDPRRMTPAPNSTSSFASKRRHS) form a disordered region. 2 positions are modified to phosphoserine: S231 and S322. Disordered stretches follow at residues 413–445 (NLNLFNNDPSGQQQQQQQQQQNSTSSTIVNSNN), 544–584 (SPKN…NIDP), 624–643 (SRSSIPNKSPPNHSATSLNH), and 652–688 (LNLSLNGSTDLPSTPQNQLKEPSYSDPISHSSHKRRR). A compositionally biased stretch (low complexity) spans 424–445 (QQQQQQQQQQNSTSSTIVNSNN). S544 is subject to Phosphoserine. The span at 544–569 (SPKNPPTTVSDSSSTINFNPGTNNLL) shows a compositional bias: polar residues. A compositionally biased stretch (basic and acidic residues) spans 575–584 (PNDKDSNIDP). The segment covering 624–634 (SRSSIPNKSPP) has biased composition (low complexity). Phosphoserine is present on S632. The span at 652–681 (LNLSLNGSTDLPSTPQNQLKEPSYSDPISH) shows a compositional bias: polar residues.

It belongs to the RSF2/TDA9 family.

It localises to the nucleus. Transcription factor that regulates expression of both nuclear and mitochondrial genes, and more specifically those required for glycerol-based growth and respiration. In Saccharomyces cerevisiae (strain ATCC 204508 / S288c) (Baker's yeast), this protein is Respiration factor 2 (RSF2).